The chain runs to 276 residues: NH(3)-dependent NAD(+) synthetase (276 aa).

Residue 43 to 50 (GISGGVDS) coordinates ATP. Asp-49 is a Mg(2+) binding site. Arg-146 is a deamido-NAD(+) binding site. Residue Thr-166 coordinates ATP. Glu-171 is a Mg(2+) binding site. Residues Lys-179 and Asp-186 each contribute to the deamido-NAD(+) site. ATP is bound by residues Lys-195 and Thr-217. 266–267 (HK) contacts deamido-NAD(+).

This sequence belongs to the NAD synthetase family. Homodimer.

The catalysed reaction is deamido-NAD(+) + NH4(+) + ATP = AMP + diphosphate + NAD(+) + H(+). Its pathway is cofactor biosynthesis; NAD(+) biosynthesis; NAD(+) from deamido-NAD(+) (ammonia route): step 1/1. Its function is as follows. Catalyzes the ATP-dependent amidation of deamido-NAD to form NAD. Uses ammonia as a nitrogen source. This chain is NH(3)-dependent NAD(+) synthetase, found in Shewanella baltica (strain OS223).